The chain runs to 247 residues: DNA polymerase epsilon subunit D (247 aa).

Residues 128–247 (KKHKADKKVP…EGQNSSDDDS (120 aa)) form a disordered region. The segment covering 150–159 (RLKDNDEQII) has biased composition (basic and acidic residues). 3 stretches are compositionally biased toward acidic residues: residues 165–188 (ADME…NDED), 196–215 (EEEE…EVEE), and 224–247 (EEDE…DDDS).

As to quaternary structure, heterotetramer. Consists of four subunits: POL2, DPB2, DPB3 and DPB4.

The protein resides in the nucleus. Functionally, as accessory component of the DNA polymerase epsilon (DNA polymerase II) participates in chromosomal DNA replication. In Debaryomyces hansenii (strain ATCC 36239 / CBS 767 / BCRC 21394 / JCM 1990 / NBRC 0083 / IGC 2968) (Yeast), this protein is DNA polymerase epsilon subunit D (DPB4).